The primary structure comprises 209 residues: Protein-L-isoaspartate O-methyltransferase (209 aa).

The active site involves Ser60.

It belongs to the methyltransferase superfamily. L-isoaspartyl/D-aspartyl protein methyltransferase family.

The protein resides in the cytoplasm. The enzyme catalyses [protein]-L-isoaspartate + S-adenosyl-L-methionine = [protein]-L-isoaspartate alpha-methyl ester + S-adenosyl-L-homocysteine. Catalyzes the methyl esterification of L-isoaspartyl residues in peptides and proteins that result from spontaneous decomposition of normal L-aspartyl and L-asparaginyl residues. It plays a role in the repair and/or degradation of damaged proteins. The chain is Protein-L-isoaspartate O-methyltransferase from Photobacterium profundum (strain SS9).